Consider the following 226-residue polypeptide: Movement and silencing protein TGBp1 (226 aa).

In terms of domain architecture, (+)RNA virus helicase ATP-binding spans 1–138; that stretch reads MDILIISLKS…IASCGFDFET (138 aa). The (+)RNA virus helicase C-terminal domain occupies 139 to 226; that stretch reads NSQEEGHLEI…KGLTYVRAGA (88 aa).

It belongs to the Tymovirales TGBp1 protein family. Homodimer and homooligomer. Interacts with capsid protein. Interacts with host AGO1; this interaction targets the host protein for degradation, thereby suppressing the antiviral RNA silencing.

Its subcellular location is the host cytoplasm. Functionally, transports viral genome to neighboring plant cells directly through plasmosdesmata, without any budding. The movement protein allows efficient cell to cell propagation, by bypassing the host cell wall barrier. Increases plasmodesma size exclusion limit. Acts as a suppressor of RNA-mediated gene silencing, also known as post-transcriptional gene silencing (PTGS), a mechanism of plant viral defense that limits the accumulation of viral RNAs. The protein is Movement and silencing protein TGBp1 of Brassica campestris (Field mustard).